The primary structure comprises 291 residues: MANNTLHRYLFEDLSVRGELVQLDDAYQQIISSKEYPKPVQNLLGELLVATTLLTATLKFEGSITLQLQGDGPVSLAVINGDNNQKVRGVARFEGDIAEDATLHQLMGRGYLVITITPKDGERYQGVVALEGENLAQCFEGYFERSEQLKTRLWLRLGEYEGKPHAAGMLLQVMPDGTGSENDFEHLEQLTDTIKNEELFGLPAEDVLYRLYNQDKVQLFEPQDVEFFCGCSRERSGGAIVTIDRAEVDDIIKTEGKISLHCDYCGTSYDFDSIDVANLFEQATSGNDTVH.

Disulfide bonds link Cys229–Cys231 and Cys262–Cys265.

Belongs to the HSP33 family. In terms of processing, under oxidizing conditions two disulfide bonds are formed involving the reactive cysteines. Under reducing conditions zinc is bound to the reactive cysteines and the protein is inactive.

It is found in the cytoplasm. Redox regulated molecular chaperone. Protects both thermally unfolding and oxidatively damaged proteins from irreversible aggregation. Plays an important role in the bacterial defense system toward oxidative stress. The sequence is that of 33 kDa chaperonin from Aliivibrio fischeri (strain ATCC 700601 / ES114) (Vibrio fischeri).